Consider the following 468-residue polypeptide: Phosphomethylpyrimidine synthase (468 aa).

Substrate is bound by residues asparagine 80, methionine 109, tyrosine 138, histidine 173, 193–195 (SRG), 234–237 (DGLR), and glutamate 273. Residue histidine 277 coordinates Zn(2+). Tyrosine 300 contacts substrate. Zn(2+) is bound at residue histidine 341. [4Fe-4S] cluster contacts are provided by cysteine 421, cysteine 424, and cysteine 429.

It belongs to the ThiC family. Homodimer. The cofactor is [4Fe-4S] cluster.

The catalysed reaction is 5-amino-1-(5-phospho-beta-D-ribosyl)imidazole + S-adenosyl-L-methionine = 4-amino-2-methyl-5-(phosphooxymethyl)pyrimidine + CO + 5'-deoxyadenosine + formate + L-methionine + 3 H(+). Its pathway is cofactor biosynthesis; thiamine diphosphate biosynthesis. Its function is as follows. Catalyzes the synthesis of the hydroxymethylpyrimidine phosphate (HMP-P) moiety of thiamine from aminoimidazole ribotide (AIR) in a radical S-adenosyl-L-methionine (SAM)-dependent reaction. This is Phosphomethylpyrimidine synthase from Anaeromyxobacter sp. (strain Fw109-5).